The chain runs to 349 residues: N-formyl peptide receptor 3 (349 aa).

Topologically, residues 1–27 are extracellular; that stretch reads METNFSIPLNETEEVLPEPAGHTVLWI. N-linked (GlcNAc...) asparagine glycans are attached at residues Asn-4 and Asn-10. The chain crosses the membrane as a helical span at residues 28–50; that stretch reads FSLLVHGVTFVFGVLGNGLVIWV. The Cytoplasmic portion of the chain corresponds to 51–61; that stretch reads AGFRMTRTVNT. A helical transmembrane segment spans residues 62-83; the sequence is ICYLNLALADFSFSAILPFRMV. At 84–100 the chain is on the extracellular side; it reads SVAMREKWPFGSFLCKL. Cys-98 and Cys-176 are joined by a disulfide. Residues 101-121 traverse the membrane as a helical segment; sequence VHVMIDINLFVSVYLITIIAL. The Cytoplasmic portion of the chain corresponds to 122–140; the sequence is DRCICVLHPAWAQNHRTMS. Residues 141–162 traverse the membrane as a helical segment; sequence LAKRVMTGLWILTIVLTLPNFI. Over 163–205 the chain is Extracellular; the sequence is FWTTIRTTNGDTYCIFNFAFWGDTAVERLNVFITMAKVFLILH. A helical transmembrane segment spans residues 206–226; the sequence is FIIGFSMPMSIITVCYGIIAA. Residues 227-242 lie on the Cytoplasmic side of the membrane; the sequence is KIHRNHMIKSSRPLRV. A helical membrane pass occupies residues 243 to 266; it reads FAAVVASFFICWFPYELIGILMAV. Topologically, residues 267–286 are extracellular; the sequence is WLKEMLLNGKYKIILVLINP. The helical transmembrane segment at 287–306 threads the bilayer; the sequence is TSSLAFFNSCLNPILYVFMG. At 307-349 the chain is on the cytoplasmic side; sequence RNFQERLIRSLPTSLERALTEVPDSAQTSNTHTTSASPPEETE. Positions 327–349 are disordered; the sequence is EVPDSAQTSNTHTTSASPPEETE. Polar residues predominate over residues 331–343; that stretch reads SAQTSNTHTTSAS.

This sequence belongs to the G-protein coupled receptor 1 family.

The protein resides in the cell membrane. Functionally, low affinity receptor for N-formyl-methionyl peptides, which are powerful neutrophils chemotactic factors. Binding of FMLP to the receptor causes activation of neutrophils. This response is mediated via a G-protein that activates a phosphatidylinositol-calcium second messenger system. In Pan troglodytes (Chimpanzee), this protein is N-formyl peptide receptor 3 (FPR3).